Here is a 927-residue protein sequence, read N- to C-terminus: Nonsense-mediated mRNA decay factor SMG8 (927 aa).

Disordered regions lie at residues N543 to S581, Q611 to N636, and Q643 to T662. Positions Q551 to Q566 are enriched in acidic residues. A compositionally biased stretch (polar residues) spans R613–D633. A compositionally biased stretch (basic and acidic residues) spans E644 to V654.

Belongs to the SMG8 family.

Involved in nonsense-mediated decay (NMD) of mRNAs containing premature stop codons. Probable component of kinase complex containing nonC and recruited to stalled ribosomes. This is Nonsense-mediated mRNA decay factor SMG8 from Drosophila sechellia (Fruit fly).